The following is a 371-amino-acid chain: MNIKGKHYRTVWVSGDGKAVEIIDQTKLPFKFEVVALTSAEMAATAIQDMWVRGAPLIGVVAAYGIALGMNHDASDMGLQRYYDLLIKTRPTAINLKWALDRMIDTLKDLCVSERKDVAWALAAEIAEEDVALCEQIGLHGAEVIREIAQKKPAGSVVNILTHCNAGWLATVDWGTALSPIYKAHENGIPVHVWVDETRPRNQGGLTAFELGSHGIPHTLIADNAGGHLMQHGDVDLCIVGTDRTTARGDVCNKIGTYLKALAAHDNHVPFYVALPSPTIDWTIEDGKSIPIEQRDGKEQSHVYGINPQGELSWVNTAPEGTRCGNYAFDVTPARYITGFITERGVCAASKSALADMFADLKSKALQGEQH.

Residues 53-55, Arg90, and Gln203 each bind substrate; that span reads RGA. Catalysis depends on Asp243, which acts as the Proton donor. 253–254 serves as a coordination point for substrate; that stretch reads NK.

Belongs to the eIF-2B alpha/beta/delta subunits family. MtnA subfamily.

It carries out the reaction 5-(methylsulfanyl)-alpha-D-ribose 1-phosphate = 5-(methylsulfanyl)-D-ribulose 1-phosphate. The enzyme catalyses 5-deoxy-alpha-D-ribose 1-phosphate = 5-deoxy-D-ribulose 1-phosphate. It functions in the pathway amino-acid biosynthesis; L-methionine biosynthesis via salvage pathway; L-methionine from S-methyl-5-thio-alpha-D-ribose 1-phosphate: step 1/6. Functionally, catalyzes the interconversion of methylthioribose-1-phosphate (MTR-1-P) into methylthioribulose-1-phosphate (MTRu-1-P). Also catalyzes the interconversion of 5-deoxyribose 1-phosphate and 5-deoxyribulose 1-phosphate. Part of a bifunctional DHAP-shunt salvage pathway for SAM by-products. The polypeptide is Methylthioribose-1-phosphate isomerase (Escherichia coli O45:K1 (strain S88 / ExPEC)).